A 152-amino-acid chain; its full sequence is Succinate dehydrogenase [ubiquinone] cytochrome b small subunit, mitochondrial (152 aa).

The transit peptide at 1–21 directs the protein to the mitochondrion; it reads MATLLRVSSLCRANRASAFKS. Over 22-56 the chain is Mitochondrial matrix; the sequence is LLIRPVPCLTQDHHMVQTSQIHTSPNHHAGSKAAS. Residues 57–78 traverse the membrane as a helical segment; it reads MHWTSERALSVALLGLLPAAYL. Topologically, residues 79 to 83 are mitochondrial intermembrane; it reads YPGAA. Residues 84 to 104 traverse the membrane as a helical segment; that stretch reads MDYSLAAALTLHGHWGLGQVV. A heme b-binding site is contributed by His-95. Topologically, residues 105–113 are mitochondrial matrix; that stretch reads TDYVHGDAK. Tyr-107 provides a ligand contact to a ubiquinone. The chain crosses the membrane as a helical span at residues 114–135; the sequence is IKMANTSLFALSALTFAGLCYF. Residues 136–152 are Mitochondrial intermembrane-facing; sequence NYHDVGICKAVSMLWSL.

This sequence belongs to the CybS family. Component of complex II composed of four subunits: the flavoprotein (FP) SDHA, iron-sulfur protein (IP) SDHB, and a cytochrome b560 composed of SDHC and SDHD.

The protein resides in the mitochondrion inner membrane. The protein operates within carbohydrate metabolism; tricarboxylic acid cycle. Membrane-anchoring subunit of succinate dehydrogenase (SDH) that is involved in complex II of the mitochondrial electron transport chain and is responsible for transferring electrons from succinate to ubiquinone (coenzyme Q). SDH also oxidizes malate to the non-canonical enol form of oxaloacetate, enol-oxaloacetate. Enol-oxaloacetate, which is a potent inhibitor of the succinate dehydrogenase activity, is further isomerized into keto-oxaloacetate. The protein is Succinate dehydrogenase [ubiquinone] cytochrome b small subunit, mitochondrial (sdhd) of Xenopus tropicalis (Western clawed frog).